The chain runs to 429 residues: MNVLIIGSGGREHALGWKAAQNPNVETIFVAPGNAGTALEPKLENVNIAVEDIAGLVAFAKEKAIELTIVGPEVPLVLGVVDAFYEAGLPIFGPTQAAAQLEGSKAFTKDFLARHQIPTAAYANFTDIEPALAYVREQGAPIVVKADGLAAGKGVIVAMTLEEAEEAIKDMLAGNAFGEAGSRVVIEEFLDGEEASFIVMVDGENVLPMATSQDHKRVGDKDTGPNTGGMGAYSPAPVVTPEIHNRVMQEVIFPTVRGMAAEGNPYTGFLYAGLMIDKDGTPKVIEYNCRFGDPETQPIMMRMESDLVELCLAAIDKKLDQVESKWDPRASIGIVLAAGGYPAAYNKGDVISGLPQVEIEGEKVFHAGTENKGGDIVTNGGRVLCATALGNSVSEAQQRAYELAKQIRWDGMFHRNDIGYRAIAREQQK.

Residues 109 to 316 form the ATP-grasp domain; that stretch reads KDFLARHQIP…LVELCLAAID (208 aa). An ATP-binding site is contributed by 135-196; that stretch reads VREQGAPIVV…EEFLDGEEAS (62 aa). Residues 212–234 form a disordered region; that stretch reads SQDHKRVGDKDTGPNTGGMGAYS. Residues 213–223 are compositionally biased toward basic and acidic residues; that stretch reads QDHKRVGDKDT. Mg(2+) contacts are provided by Glu286 and Asn288.

This sequence belongs to the GARS family. It depends on Mg(2+) as a cofactor. Requires Mn(2+) as cofactor.

It carries out the reaction 5-phospho-beta-D-ribosylamine + glycine + ATP = N(1)-(5-phospho-beta-D-ribosyl)glycinamide + ADP + phosphate + H(+). It functions in the pathway purine metabolism; IMP biosynthesis via de novo pathway; N(1)-(5-phospho-D-ribosyl)glycinamide from 5-phospho-alpha-D-ribose 1-diphosphate: step 2/2. The sequence is that of Phosphoribosylamine--glycine ligase from Vibrio vulnificus (strain YJ016).